The primary structure comprises 438 residues: chitinase-like effector (438 aa).

The signal sequence occupies residues 1 to 23; that stretch reads MFTPLSSVTALLALSSAFLGAQA. The 384-residue stretch at 54–437 folds into the GH18 domain; that stretch reads FIAKGYYTGW…DAIRSGAGLS (384 aa). Residue tryptophan 416 participates in chitin binding.

The protein belongs to the glycosyl hydrolase 18 family.

It is found in the secreted. Functionally, catalytically impaired chitinase that binds efficiently to chitin, but not to chitosan, xylan, or cellulose. Despite the lack of chitinolytic activity, retains substrate binding specificity and acts as an effector to prevent chitin-triggered immunity by sequestering immunogenic chitin fragments. Does not function in the protection of fungal cell wall against plant hydrolytic enzymes. In Moniliophthora perniciosa (Witches'-broom disease fungus), this protein is chitinase-like effector.